The chain runs to 286 residues: Bifunctional protein FolD (286 aa).

Residues 166–168 and I232 contribute to the NADP(+) site; that span reads GAS.

It belongs to the tetrahydrofolate dehydrogenase/cyclohydrolase family. As to quaternary structure, homodimer.

It catalyses the reaction (6R)-5,10-methylene-5,6,7,8-tetrahydrofolate + NADP(+) = (6R)-5,10-methenyltetrahydrofolate + NADPH. The catalysed reaction is (6R)-5,10-methenyltetrahydrofolate + H2O = (6R)-10-formyltetrahydrofolate + H(+). The protein operates within one-carbon metabolism; tetrahydrofolate interconversion. Its function is as follows. Catalyzes the oxidation of 5,10-methylenetetrahydrofolate to 5,10-methenyltetrahydrofolate and then the hydrolysis of 5,10-methenyltetrahydrofolate to 10-formyltetrahydrofolate. In Shewanella piezotolerans (strain WP3 / JCM 13877), this protein is Bifunctional protein FolD.